A 696-amino-acid chain; its full sequence is Elongation factor G (696 aa).

Residues 10 to 290 (THFRNIGIAA…AVVDYLPSPL (281 aa)) form the tr-type G domain. Residues 19 to 26 (AHIDAGKT), 89 to 93 (DTPGH), and 143 to 146 (NKMD) each bind GTP.

This sequence belongs to the TRAFAC class translation factor GTPase superfamily. Classic translation factor GTPase family. EF-G/EF-2 subfamily.

It localises to the cytoplasm. Catalyzes the GTP-dependent ribosomal translocation step during translation elongation. During this step, the ribosome changes from the pre-translocational (PRE) to the post-translocational (POST) state as the newly formed A-site-bound peptidyl-tRNA and P-site-bound deacylated tRNA move to the P and E sites, respectively. Catalyzes the coordinated movement of the two tRNA molecules, the mRNA and conformational changes in the ribosome. This is Elongation factor G from Deinococcus geothermalis (strain DSM 11300 / CIP 105573 / AG-3a).